The chain runs to 152 residues: Putative RING finger protein 157L (152 aa).

The segment at 111-146 (CVVCYENEICIKIQPCNHFVVCKSCFNRLNTCPMCR) adopts an RING-type zinc-finger fold.

It belongs to the IIV-6 157L family.

The sequence is that of Putative RING finger protein 157L from Invertebrate iridescent virus 6 (IIV-6).